The following is a 66-amino-acid chain: Large ribosomal subunit protein bL35 (66 aa).

The span at 18 to 27 (ATGKIKSTQS) shows a compositional bias: polar residues. Residues 18–41 (ATGKIKSTQSAKRHGMTKRSKRSI) form a disordered region. The segment covering 28 to 41 (AKRHGMTKRSKRSI) has biased composition (basic residues).

It belongs to the bacterial ribosomal protein bL35 family.

This chain is Large ribosomal subunit protein bL35, found in Ehrlichia ruminantium (strain Gardel).